The chain runs to 293 residues: Dioxygenase cdmA (293 aa).

Residues H135, D137, and H212 each contribute to the Fe cation site.

The protein belongs to the PhyH family. Homodimer. It depends on Fe cation as a cofactor.

The catalysed reaction is chrodrimanin C + 2-oxoglutarate + O2 = verruculide A + succinate + CO2 + H2O. It catalyses the reaction chrodrimanin H + 2-oxoglutarate + O2 = chrodrimanin E + succinate + CO2 + H2O. It functions in the pathway secondary metabolite biosynthesis; terpenoid biosynthesis. Functionally, dioxygenase; part of the gene cluster that mediates the biosynthesis of chrodrimanin B, a meroterpenoid that acts as a potent blocker of insect GABA-gated chloride channels. The first step of the pathway is the biosynthesis of 6-hydroxymellein by the polyketide synthase cdmE. The prenyltransferase cdmH acts as a 6-hydroxymellein 5-farnesyltransferase and produces the hydrophobic metabolite verruculide C. The FAD-dependent monooxygenase cdmI further converts verruculide C into verruculide B. The terpene cyclase cdmG then produced the pentacyclic molecule 3-hydroxypentacecilide A, the backbone structure of chrodrimanin B, via folding the farnesyl moiety of the substrate into the chair-boat conformation. The short-chain dehydrogenase/reductase cdmF functions as the 3-OH dehydrogenase that oxidizes the C-3 hydroxyl group of 3-hydroxypentacecilide A and produces chrodrimanin C, the dehydrogenated product of 3-hydroxypentacecilide A. The cytochrome P450 monooxygenase cdmJ then accepts both 3-hydroxypentacecilide A and chrodrimanin C and functions as a C-7-beta-hydroxylase to produce respectively chrodrimanin H and chrodrimanin F. The dioxygenase cdmA accepts chrodrimanin H to afford chrodrimanin E, which is further transformed to chrodrimanin A by the dioxygenase cdmD. CdmA can also accept chrodrimanin C as substrate to convert it into verruculide A, which is further converted into chrodrimanin T by cdmD. The last step of the biosynthesis is proposed to be performed by the acetyltransferase cdmC which acetylates chrodrimanin A to yield chrodrimanin B. The pathway may also lead to the production of additional shunt products, including chrodrimanins T and U. The polypeptide is Dioxygenase cdmA (Talaromyces verruculosus (Penicillium verruculosum)).